A 124-amino-acid chain; its full sequence is Small ribosomal subunit protein uS12 (124 aa).

The disordered stretch occupies residues 9–28 (KSERTVQKNQTKSPALDSCP). Position 89 is a 3-methylthioaspartic acid (Asp-89).

This sequence belongs to the universal ribosomal protein uS12 family. Part of the 30S ribosomal subunit. Contacts proteins S8 and S17. May interact with IF1 in the 30S initiation complex.

With S4 and S5 plays an important role in translational accuracy. In terms of biological role, interacts with and stabilizes bases of the 16S rRNA that are involved in tRNA selection in the A site and with the mRNA backbone. Located at the interface of the 30S and 50S subunits, it traverses the body of the 30S subunit contacting proteins on the other side and probably holding the rRNA structure together. The combined cluster of proteins S8, S12 and S17 appears to hold together the shoulder and platform of the 30S subunit. The protein is Small ribosomal subunit protein uS12 of Bdellovibrio bacteriovorus (strain ATCC 15356 / DSM 50701 / NCIMB 9529 / HD100).